Consider the following 150-residue polypeptide: UPF0735 ACT domain-containing protein Helmi_18680 (150 aa).

One can recognise an ACT domain in the interval Ser72–Ser147.

This sequence belongs to the UPF0735 family.

The chain is UPF0735 ACT domain-containing protein Helmi_18680 from Heliobacterium modesticaldum (strain ATCC 51547 / Ice1).